Consider the following 117-residue polypeptide: Large ribosomal subunit protein bL20 (117 aa).

The protein belongs to the bacterial ribosomal protein bL20 family.

Functionally, binds directly to 23S ribosomal RNA and is necessary for the in vitro assembly process of the 50S ribosomal subunit. It is not involved in the protein synthesizing functions of that subunit. In Thermomicrobium roseum (strain ATCC 27502 / DSM 5159 / P-2), this protein is Large ribosomal subunit protein bL20.